The sequence spans 295 residues: Nucleotide-binding protein BLi03725/BL03417 (295 aa).

Residue 16-23 (GMSGAGKT) coordinates ATP. 67 to 70 (DLRG) lines the GTP pocket.

Belongs to the RapZ-like family.

In terms of biological role, displays ATPase and GTPase activities. The sequence is that of Nucleotide-binding protein BLi03725/BL03417 from Bacillus licheniformis (strain ATCC 14580 / DSM 13 / JCM 2505 / CCUG 7422 / NBRC 12200 / NCIMB 9375 / NCTC 10341 / NRRL NRS-1264 / Gibson 46).